The sequence spans 120 residues: Large ribosomal subunit protein bL20 (120 aa).

The protein belongs to the bacterial ribosomal protein bL20 family.

In terms of biological role, binds directly to 23S ribosomal RNA and is necessary for the in vitro assembly process of the 50S ribosomal subunit. It is not involved in the protein synthesizing functions of that subunit. The protein is Large ribosomal subunit protein bL20 of Novosphingobium aromaticivorans (strain ATCC 700278 / DSM 12444 / CCUG 56034 / CIP 105152 / NBRC 16084 / F199).